The chain runs to 181 residues: MGFFDDKQDFLEETFAKYPPEGRRAAIMPLLRRVQQEEGWIRPERIEEIARLVGTTPTEVMGVASFYSYYQFVPTGKYHLQVCATLSCKLAGAEELWDYLTETLGIGPGEVTPDGLFSVQKVECLGSCHTAPVIQVNDEPYVECVTRARLEALLAGLRAGKRLEEIELPGKCGHHVHEVEV.

[2Fe-2S] cluster contacts are provided by Cys83, Ser87, Cys88, Cys124, and Cys128. A disulfide bridge connects residues Cys144 and Cys172.

The protein belongs to the complex I 24 kDa subunit family. As to quaternary structure, NDH-1 is composed of 15 different subunits, Nqo1 to Nqo15. The complex has a L-shaped structure, with the hydrophobic arm (subunits Nqo7, Nqo8 and Nqo10 to Nqo14) embedded in the membrane and the hydrophilic peripheral arm (subunits Nqo1 to Nqo6, Nqo9 and Nqo15) protruding into the bacterial cytoplasm. The hydrophilic domain contains all the redox centers. It depends on [2Fe-2S] cluster as a cofactor.

The protein resides in the cell membrane. It carries out the reaction a quinone + NADH + 5 H(+)(in) = a quinol + NAD(+) + 4 H(+)(out). NDH-1 shuttles electrons from NADH, via FMN and iron-sulfur (Fe-S) centers, to quinones in the respiratory chain. The immediate electron acceptor for the enzyme in this species is menaquinone. Couples the redox reaction to proton translocation (for every two electrons transferred, four hydrogen ions are translocated across the cytoplasmic membrane), and thus conserves the redox energy in a proton gradient required for the synthesis of ATP. The chain is NADH-quinone oxidoreductase subunit 2 (nqo2) from Thermus thermophilus (strain ATCC 27634 / DSM 579 / HB8).